A 384-amino-acid chain; its full sequence is Secreted effector protein EspF(U) (384 aa).

Repeat copies occupy residues 96–142, 143–189, 190–236, 237–283, 284–330, and 331–377. The 6 X 48 AA approximate tandem repeats stretch occupies residues 96–377; it reads IXPARSMAEH…RLMQHLAEHG (282 aa). The tract at residues 247–266 is disordered; the sequence is IPPAPNWPAPPPPVQNEQSR. Residues 248 to 260 show a composition bias toward pro residues; that stretch reads PPAPNWPAPPPPV.

Belongs to the EspF(U)/TccP family. As to quaternary structure, interacts with host BAIAP2 and host WASL/N-WASP. Can also interact with host proteins BAIAP2L1 and WAS/WASP.

The protein localises to the secreted. It localises to the host cytoplasm. Functionally, required for efficient pedestal formation in host epithelial cells during infection. Acts as an intermediate between Tir (via host BAIAP2) and host WASL/N-WASP. Directly binds and activates WASL/N-WASP, which stimulates actin polymerization and leads to the formation of actin pedestals at the sites of bacterial adhesion. The protein is Secreted effector protein EspF(U) (espF(U)) of Escherichia coli O157:H7.